An 89-amino-acid chain; its full sequence is Ubiquinol-cytochrome-c reductase complex assembly factor 3 (89 aa).

At 1–7 (MEAARKA) the chain is on the mitochondrial matrix side. A helical membrane pass occupies residues 8-28 (LAVVAVLGAGGGVGSILFALV). The mediates lipid-binding stretch occupies residues 23 to 80 (ILFALVTPGELQKQLMLQEMPERDSRRRDEAVRTKELVMATLKDAAATKENVAWRRNW). The Mitochondrial intermembrane portion of the chain corresponds to 29 to 89 (TPGELQKQLM…WTVRGDGRSA (61 aa)).

It belongs to the UQCC3 family. Associates with the ubiquinol-cytochrome c reductase complex (mitochondrial respiratory chain complex III(CIII) or cytochrome b-c1 complex). Interacts with UQCC1. Forms a complex, named COMC, composed of UQCC1, UQCC2; UQCC3 and UQCC4; mediates MT-CYB hemylation and association with the first nuclear-encoded complex III subunit UQCRQ. Probably cleaved by OMA1 under mitochondrial stress conditions.

It is found in the mitochondrion inner membrane. Required for the assembly of the ubiquinol-cytochrome c reductase complex (mitochondrial respiratory chain complex III or cytochrome b-c1 complex), mediating cytochrome b recruitment and probably stabilization within the complex. Thereby, plays an important role in ATP production by mitochondria. Cardiolipin-binding protein, it may also control the cardiolipin composition of mitochondria membranes and their morphology. This chain is Ubiquinol-cytochrome-c reductase complex assembly factor 3, found in Rattus norvegicus (Rat).